The primary structure comprises 339 residues: Annexin A2 (339 aa).

The residue at position 2 (Ser2) is an N-acetylserine. The interval 2–24 is S100A10-binding site; sequence STVHEILCKLSLEGDHSTPPSAY. A Phosphotyrosine; by SRC modification is found at Tyr24. Ser26 bears the Phosphoserine; by PKC mark. Annexin repeat units follow at residues 33 to 104 and 105 to 176; these read FDAE…GLLK and TPAQ…ALAK. The residue at position 49 (Lys49) is an N6-acetyllysine; alternate. Residue Lys49 forms a Glycyl lysine isopeptide (Lys-Gly) (interchain with G-Cter in SUMO1); alternate linkage. Lys49 is covalently cross-linked (Glycyl lysine isopeptide (Lys-Gly) (interchain with G-Cter in SUMO2); alternate). The residue at position 152 (Lys152) is an N6-acetyllysine. Residue Ser184 is modified to Phosphoserine. 2 Annexin repeats span residues 189-261 and 265-336; these read ELID…NLVQ and NKPL…YLCG. Tyr199 is subject to Phosphotyrosine. Lys227 bears the N6-acetyllysine mark.

This sequence belongs to the annexin family. As to quaternary structure, heterotetramer containing 2 light chains of S100A10/p11 and 2 heavy chains of ANXA2/p36. Interacts with ATP1B1. Interacts with DYSF. Interacts with COCH. Interacts (via repeat Annexin 1) with PCSK9 (via the C-terminal domain); the interaction inhibits the degradation of LDLR. Interacts with CEACAM1 (via the cytoplasmic domain); this interaction is regulated by phosphorylation of CEACAM1. Interacts with APPL2 and APPL1; targets APPL2 to endosomes and acting in parallel to RAB5A. Interacts with S100A4. May interact with UBAP2. Interacts with PLEKHG4B; this interaction is required for PLEKHG4B localization to cell-cell adhesions. Interacts with FAM13A. Interacts with salivary cystatin-L2 (via loop 2) from the tick Ixodes scapularis; the interaction results in reduced activation of mouse NLRC4 inflammasome formation upon Anaplasma phagocytophilum infection. ISGylated.

The protein resides in the secreted. Its subcellular location is the extracellular space. It is found in the extracellular matrix. It localises to the basement membrane. The protein localises to the melanosome. The protein resides in the early endosome. Functionally, calcium-regulated membrane-binding protein whose affinity for calcium is greatly enhanced by anionic phospholipids. It binds two calcium ions with high affinity. May be involved in heat-stress response. Inhibits PCSK9-enhanced LDLR degradation, probably reduces PCSK9 protein levels via a translational mechanism but also competes with LDLR for binding with PCSK9. Binds to endosomes damaged by phagocytosis of particulate wear debris and participates in endosomal membrane stabilization, thereby limiting NLRP3 inflammasome activation. Required for endothelial cell surface plasmin generation and may support fibrinolytic surveillance and neoangiogenesis. Its function is as follows. (Microbial infection) Regulates the formation of the NLRC4 inflammasome triggered by Anaplasma phagocytophilum infection. (Microbial infection) Protects against Klebsiella pneumoniae infection. Attenuates bacteria-induced pulmonary inflammation and promotes intro-abdominal pathogen clearance. Promotes anti-inflammatory responses by facilitating TLR4 internalization and translocation into early endosomal membranes; this leads to activation of TRAM-dependent endosomal signaling and release of anti-inflammatory cytokines. In terms of biological role, (Microbial infection) Promotes macrophage phagocytic efficiency towards Cryptococcus neoformans and ability to control fungal infection inside the cells. Functionally, (Microbial infection) Contributes to protection against Pseudomonas aeruginosa infection by regulating autophagy via the AKT1-mTOR-ULK1/2 signaling pathway and activation of Rho GTPases via FAM13A-mediated mechanism. This is Annexin A2 (Anxa2) from Mus musculus (Mouse).